A 691-amino-acid chain; its full sequence is DNA ligase (691 aa).

Residues 41–45 (DAEYD), 90–91 (SL), and glutamate 130 each bind NAD(+). Lysine 132 functions as the N6-AMP-lysine intermediate in the catalytic mechanism. Arginine 153, glutamate 190, lysine 307, and lysine 331 together coordinate NAD(+). Cysteine 425, cysteine 428, cysteine 443, and cysteine 449 together coordinate Zn(2+). Positions 610–691 (APQGVLAGKT…MHTLLEGHAR (82 aa)) constitute a BRCT domain.

The protein belongs to the NAD-dependent DNA ligase family. LigA subfamily. Mg(2+) is required as a cofactor. Requires Mn(2+) as cofactor.

It carries out the reaction NAD(+) + (deoxyribonucleotide)n-3'-hydroxyl + 5'-phospho-(deoxyribonucleotide)m = (deoxyribonucleotide)n+m + AMP + beta-nicotinamide D-nucleotide.. Functionally, DNA ligase that catalyzes the formation of phosphodiester linkages between 5'-phosphoryl and 3'-hydroxyl groups in double-stranded DNA using NAD as a coenzyme and as the energy source for the reaction. It is essential for DNA replication and repair of damaged DNA. This is DNA ligase from Burkholderia pseudomallei (strain 1106a).